Reading from the N-terminus, the 278-residue chain is Biotin synthase (278 aa).

The 227-residue stretch at 1 to 227 (MQIMLCAISN…QSVVMVAGGR (227 aa)) folds into the Radical SAM core domain. [4Fe-4S] cluster is bound by residues Cys16, Cys20, and Cys23. Residues Cys60, Cys95, and Cys153 each contribute to the [2Fe-2S] cluster site.

Belongs to the radical SAM superfamily. Biotin synthase family. In terms of assembly, homodimer. [4Fe-4S] cluster is required as a cofactor. [2Fe-2S] cluster serves as cofactor.

The enzyme catalyses (4R,5S)-dethiobiotin + (sulfur carrier)-SH + 2 reduced [2Fe-2S]-[ferredoxin] + 2 S-adenosyl-L-methionine = (sulfur carrier)-H + biotin + 2 5'-deoxyadenosine + 2 L-methionine + 2 oxidized [2Fe-2S]-[ferredoxin]. Its pathway is cofactor biosynthesis; biotin biosynthesis; biotin from 7,8-diaminononanoate: step 2/2. In terms of biological role, catalyzes the conversion of dethiobiotin (DTB) to biotin by the insertion of a sulfur atom into dethiobiotin via a radical-based mechanism. In Campylobacter jejuni subsp. doylei (strain ATCC BAA-1458 / RM4099 / 269.97), this protein is Biotin synthase.